The sequence spans 45 residues: Large ribosomal subunit protein bL34 (45 aa).

The tract at residues 1-45 (MTKRTLGGTSRKRKRVSGFRVRMRSHTGRRVIRTRRKRGRSRLAV) is disordered. Basic residues predominate over residues 10 to 45 (SRKRKRVSGFRVRMRSHTGRRVIRTRRKRGRSRLAV).

Belongs to the bacterial ribosomal protein bL34 family.

This chain is Large ribosomal subunit protein bL34, found in Parasynechococcus marenigrum (strain WH8102).